The chain runs to 782 residues: Probable transcription factor claV (782 aa).

Disordered regions lie at residues 1–37, 49–128, 156–180, 717–745, and 758–782; these read MPPR…VAKR, ALLT…GKDE, KSTS…NLTH, AGVG…PMPV, and GNTV…GGVD. Residues 70–79 show a composition bias toward basic residues; that stretch reads RKTKKKKKKG. Polar residues predominate over residues 86–102; sequence QTPVMTEPPQSSRTSPN. Positions 157–166 are enriched in low complexity; sequence STSAGASGSS. Acidic residues predominate over residues 723–740; the sequence is ADEDDEVEDDDEDEDEEV.

It is found in the nucleus. Its pathway is secondary metabolite biosynthesis; terpenoid biosynthesis. Functionally, probable transcription factor; part of the gene cluster that mediates the biosynthesis of clavilactone A, a meroterpenoid that features a unique benzo-fused ten-membered carbocyclic ring unit with an alpha,beta-epoxy-gamma-lactone moiety, forming an intriguing 10/5/3 tricyclic nested skeleton. The chain is Probable transcription factor claV from Ampulloclitocybe clavipes (Club foot).